We begin with the raw amino-acid sequence, 1389 residues long: uncharacterized protein (1389 aa).

A coiled-coil region spans residues 43–94; it reads STIAQRVSQLENEVAEINVALAEHVNELNSQEKRIDKLEKTVKKKKSNCSDD. A disordered region spans residues 294–353; sequence HKNRRSKSDNSDLSEYSSSNSDDSECTDSDGSSCSTDGSPDCTESENTESHRSHGKKKHR. Composition is skewed to low complexity over residues 304–314 and 322–335; these read SDLSEYSSSNS and SDGS…SPDC. WD repeat units follow at residues 867-907, 1017-1056, and 1115-1156; these read TFTD…VKHI, GYNE…TPSG, and GISN…ILST.

The protein resides in the virion. This is an uncharacterized protein from Acanthamoeba polyphaga (Amoeba).